The chain runs to 297 residues: Formamidopyrimidine-DNA glycosylase (297 aa).

The Schiff-base intermediate with DNA role is filled by Pro2. Glu3 serves as the catalytic Proton donor. Catalysis depends on Lys58, which acts as the Proton donor; for beta-elimination activity. Residues His104, Arg127, and Lys170 each contribute to the DNA site. An FPG-type zinc finger spans residues 261 to 297; sequence SVYDREGKPCRKEGCSGTIQRFVQGGRSTFYCPICQR. Arg287 functions as the Proton donor; for delta-elimination activity in the catalytic mechanism.

It belongs to the FPG family. Monomer. Requires Zn(2+) as cofactor.

The enzyme catalyses Hydrolysis of DNA containing ring-opened 7-methylguanine residues, releasing 2,6-diamino-4-hydroxy-5-(N-methyl)formamidopyrimidine.. It carries out the reaction 2'-deoxyribonucleotide-(2'-deoxyribose 5'-phosphate)-2'-deoxyribonucleotide-DNA = a 3'-end 2'-deoxyribonucleotide-(2,3-dehydro-2,3-deoxyribose 5'-phosphate)-DNA + a 5'-end 5'-phospho-2'-deoxyribonucleoside-DNA + H(+). In terms of biological role, involved in base excision repair of DNA damaged by oxidation or by mutagenic agents. Acts as a DNA glycosylase that recognizes and removes damaged bases. Has a preference for oxidized purines, such as 7,8-dihydro-8-oxoguanine (8-oxoG). Has AP (apurinic/apyrimidinic) lyase activity and introduces nicks in the DNA strand. Cleaves the DNA backbone by beta-delta elimination to generate a single-strand break at the site of the removed base with both 3'- and 5'-phosphates. The polypeptide is Formamidopyrimidine-DNA glycosylase (Chelativorans sp. (strain BNC1)).